Consider the following 404-residue polypeptide: 11-beta-hydroxysteroid dehydrogenase type 2 (404 aa).

82–111 is an NAD(+) binding site; it reads TRAVLITGCDSGFGNATAKKLDTMGFTVLA. Ser219 contributes to the substrate binding site. Tyr232 acts as the Proton acceptor in catalysis. Residues 383 to 404 are disordered; sequence LTSARDIAQDQGPRPDPSPTAQ.

This sequence belongs to the short-chain dehydrogenases/reductases (SDR) family. Interacts with ligand-free cytoplasmic NR3C2. In terms of tissue distribution, highly expressed in kidney, adrenal and colon; detected at lower levels on lung, liver, and spleen. Expressed in oocytes. Expressed in uterine tissues and in corpora lutea.

The protein resides in the microsome. The protein localises to the endoplasmic reticulum. The enzyme catalyses an 11beta-hydroxysteroid + NAD(+) = an 11-oxosteroid + NADH + H(+). It catalyses the reaction corticosterone + NAD(+) = 11-dehydrocorticosterone + NADH + H(+). It carries out the reaction cortisol + NAD(+) = cortisone + NADH + H(+). The catalysed reaction is 11beta,17beta-dihydroxyandrost-4-ene-3-one + NAD(+) = 17beta-hydroxyandrost-4-ene-3,11-dione + NADH + H(+). The enzyme catalyses 11beta-hydroxyandrost-4-ene-3,17-dione + NAD(+) = androst-4-ene-3,11,17-trione + NADH + H(+). Its pathway is steroid metabolism. Inhibited by glycyrrhetinic acid, carbenoloxone, 11-alpha-OH-progesterone and 11-beta-OH-progesterone. Functionally, catalyzes the conversion of biologically active 11beta-hydroxyglucocorticoids (11beta-hydroxysteroid) such as cortisol, to inactive 11-ketoglucocorticoids (11-oxosteroid) such as cortisone, in the presence of NAD(+). Functions as a dehydrogenase (oxidase), thereby decreasing the concentration of active glucocorticoids, thus protecting the nonselective mineralocorticoid receptor from occupation by glucocorticoids. Affinity towards corticosterone is higher than cortisol or dexamethasone. Plays an important role in maintaining glucocorticoids balance during preimplantation and protects the fetus from excessive maternal corticosterone exposure. Catalyzes the oxidation of 11beta-hydroxytestosterone (11beta,17beta-dihydroxyandrost-4-ene-3-one) to 11-ketotestosterone (17beta-hydroxyandrost-4-ene-3,11-dione), a major bioactive androgen. Catalyzes the conversion of 11beta-hydroxyandrostenedione (11beta-hydroxyandrost-4-ene-3,17-dione) to 11-ketoandrostenedione (androst-4-ene-3,11,17-trione), which can be further metabolized to 11-ketotestosterone. Converts 7-beta-25-dihydroxycholesterol to 7-oxo-25-hydroxycholesterol in vitro. 7-beta-25-dihydroxycholesterol (not 7-oxo-25-hydroxycholesterol) acts as ligand for the G-protein-coupled receptor (GPCR) Epstein-Barr virus-induced gene 2 (EBI2) and may thereby regulate immune cell migration. May protect ovulating oocytes and fertilizing spermatozoa from the adverse effects of cortisol. This is 11-beta-hydroxysteroid dehydrogenase type 2 (HSD11B2) from Bos taurus (Bovine).